We begin with the raw amino-acid sequence, 60 residues long: Toxin 5 (60 aa).

Disulfide bonds link cysteine 3–cysteine 22, cysteine 17–cysteine 39, cysteine 41–cysteine 52, and cysteine 53–cysteine 58.

Belongs to the three-finger toxin family. Short-chain subfamily. Type I alpha-neurotoxin sub-subfamily. As to expression, expressed by the venom gland.

The protein localises to the secreted. Its function is as follows. Binds to muscle nicotinic acetylcholine receptor (nAChR) and inhibit acetylcholine from binding to the receptor, thereby impairing neuromuscular transmission. This chain is Toxin 5, found in Hydrophis schistosus (Beaked sea snake).